The following is a 154-amino-acid chain: Large ribosomal subunit protein uL13 (154 aa).

This sequence belongs to the universal ribosomal protein uL13 family. In terms of assembly, part of the 50S ribosomal subunit.

In terms of biological role, this protein is one of the early assembly proteins of the 50S ribosomal subunit, although it is not seen to bind rRNA by itself. It is important during the early stages of 50S assembly. The sequence is that of Large ribosomal subunit protein uL13 from Brucella abortus (strain S19).